We begin with the raw amino-acid sequence, 623 residues long: MPSVYGDRLTTFEDSEKESEYGYVRKVSGPVVVADGMGGAAMYELVRVGHDNLIGEIIRLEGDSATIQVYEETAGLMVNDPVLRTHKPLSVELGPGILGNIFDGIQRPLKTIAKRSGDVYIPRGVSVPALDKDTLWEFQPKKIGEGDLLTGGDLYATVFENSLMQHHVALPPDAMGKITYVAPAGQYSLKDTVLELEFQGVKKQFTMLQTWPVRTPRPVASKLAADTPLLTGQRVLDALFPSVLGGTCAIPGAFGCGKTVISQALSKYSNSDTVVYVGCGERGNEMAEVLMDFPQLTMTLPDGREESVMKRTTLVANTSNMPVAAREASIYTGITIAEYFRDMGYNVSMMADSTSRWAEALREISGRLAEMPADSGYPAYLAARLASFYERAGKVKCLGGPERNGSVTIVGAVSPPGGDFSDPVTSATLSIVQVFWGLDKKLAQRKHFPSVNWLISYSKYSTALESFYEKFDSDFIDIRTKAREVLQREDDLNEIVQLVGKDALAETDKITLETAKLLREDYLAQNAFTPYDKFCPFYKSVWMMRNIIHFYNLANQAVERGAGMDGQKISYTLIKHRLGDLFYRLVSQKFEDPAEGEDVLVGKFKKLHDDLTSGFRNLEDETR.

252–259 (GAFGCGKT) is a binding site for ATP.

Belongs to the ATPase alpha/beta chains family. As to quaternary structure, V-ATPase is a heteromultimeric enzyme composed of a peripheral catalytic V1 complex (main components: subunits A, B, C, D, E, and F) attached to an integral membrane V0 proton pore complex (main component: the proteolipid protein).

It catalyses the reaction ATP + H2O + 4 H(+)(in) = ADP + phosphate + 5 H(+)(out). In terms of biological role, catalytic subunit of the peripheral V1 complex of vacuolar ATPase. V-ATPase vacuolar ATPase is responsible for acidifying a variety of intracellular compartments in eukaryotic cells. This Daucus carota (Wild carrot) protein is V-type proton ATPase catalytic subunit A.